A 30-amino-acid chain; its full sequence is Brevinin-2PTa (30 aa).

Cysteines 24 and 30 form a disulfide.

Expressed by the skin glands.

Its subcellular location is the secreted. Has antibacterial activity against the Gram-positive bacterium S.aureus ATCC 25923 (MIC=18 uM) and the Gram-negative bacterium E.coli ATCC 25726 (MIC=18 uM). The protein is Brevinin-2PTa of Pulchrana picturata (Malaysian fire frog).